A 408-amino-acid polypeptide reads, in one-letter code: Multidrug resistance protein MdtG (408 aa).

The next 11 helical transmembrane spans lie at 16 to 36 (LIVA…VMPF), 58 to 78 (IVFS…GGLA), 92 to 112 (LGMG…QFLI), 115 to 135 (ALLG…ATQV), 146 to 166 (TLST…GLLA), 173 to 193 (PVFF…LFCI), 224 to 244 (LFVT…ILTL), 256 to 276 (VAFI…LSAP), 290 to 310 (ILIT…YVQT), 319 to 339 (FLLG…LVYN), and 378 to 398 (AVFL…WNSL).

The protein belongs to the major facilitator superfamily. DHA1 family. MdtG (TC 2.A.1.2.20) subfamily.

It localises to the cell inner membrane. Its function is as follows. Confers resistance to fosfomycin and deoxycholate. This is Multidrug resistance protein MdtG from Escherichia coli O6:K15:H31 (strain 536 / UPEC).